The primary structure comprises 537 residues: Tegument protein BRRF2 (537 aa).

Disordered stretches follow at residues 321–366, 378–398, 414–466, and 486–537; these read RPRF…AVPP, AKQNRGGMGSLHLAKPEETSP, SKQH…DEEF, and GLRV…LSVV. The span at 334 to 347 shows a compositional bias: polar residues; it reads EPQQTCSQLTSRGN. The span at 423–441 shows a compositional bias: low complexity; sequence SSQAAPSFSSVAPVASLSG. Residues 492–517 are compositionally biased toward acidic residues; that stretch reads DEDEDGSEDGEFSDLDLSDSDHEGDE.

This sequence belongs to the lymphocryptovirus BRRF2 family.

It localises to the virion tegument. This Homo sapiens (Human) protein is Tegument protein BRRF2.